The sequence spans 172 residues: Protein-export protein SecB (172 aa).

Belongs to the SecB family. Homotetramer, a dimer of dimers. One homotetramer interacts with 1 SecA dimer.

It localises to the cytoplasm. Its function is as follows. One of the proteins required for the normal export of preproteins out of the cell cytoplasm. It is a molecular chaperone that binds to a subset of precursor proteins, maintaining them in a translocation-competent state. It also specifically binds to its receptor SecA. This is Protein-export protein SecB from Xylella fastidiosa (strain Temecula1 / ATCC 700964).